The primary structure comprises 194 residues: Probable nicotinate-nucleotide adenylyltransferase (194 aa).

This sequence belongs to the NadD family.

It carries out the reaction nicotinate beta-D-ribonucleotide + ATP + H(+) = deamido-NAD(+) + diphosphate. Its pathway is cofactor biosynthesis; NAD(+) biosynthesis; deamido-NAD(+) from nicotinate D-ribonucleotide: step 1/1. Catalyzes the reversible adenylation of nicotinate mononucleotide (NaMN) to nicotinic acid adenine dinucleotide (NaAD). This is Probable nicotinate-nucleotide adenylyltransferase from Brucella suis biovar 1 (strain 1330).